A 149-amino-acid polypeptide reads, in one-letter code: UPF0260 protein PSPTO_3918 (149 aa).

Belongs to the UPF0260 family.

The chain is UPF0260 protein PSPTO_3918 from Pseudomonas syringae pv. tomato (strain ATCC BAA-871 / DC3000).